The following is a 132-amino-acid chain: L-ectoine synthase (132 aa).

It belongs to the ectoine synthase family.

The enzyme catalyses (2S)-4-acetamido-2-aminobutanoate = L-ectoine + H2O. It functions in the pathway amine and polyamine biosynthesis; ectoine biosynthesis; L-ectoine from L-aspartate 4-semialdehyde: step 3/3. Catalyzes the circularization of gamma-N-acetyl-alpha,gamma-diaminobutyric acid (ADABA) to ectoine (1,4,5,6-tetrahydro-2-methyl-4-pyrimidine carboxylic acid), which is an excellent osmoprotectant. This chain is L-ectoine synthase (ectC), found in Streptomyces anulatus (Streptomyces chrysomallus).